A 448-amino-acid polypeptide reads, in one-letter code: Phosphoglucosamine mutase (448 aa).

The active-site Phosphoserine intermediate is Ser100. Residues Ser100, Asp240, Asp242, and Asp244 each contribute to the Mg(2+) site. The residue at position 100 (Ser100) is a Phosphoserine.

It belongs to the phosphohexose mutase family. Mg(2+) serves as cofactor. Activated by phosphorylation.

It catalyses the reaction alpha-D-glucosamine 1-phosphate = D-glucosamine 6-phosphate. Its function is as follows. Catalyzes the conversion of glucosamine-6-phosphate to glucosamine-1-phosphate. This Bacillus licheniformis (strain ATCC 14580 / DSM 13 / JCM 2505 / CCUG 7422 / NBRC 12200 / NCIMB 9375 / NCTC 10341 / NRRL NRS-1264 / Gibson 46) protein is Phosphoglucosamine mutase.